We begin with the raw amino-acid sequence, 261 residues long: Phosphoribosylaminoimidazole-succinocarboxamide synthase (261 aa).

This sequence belongs to the SAICAR synthetase family.

It catalyses the reaction 5-amino-1-(5-phospho-D-ribosyl)imidazole-4-carboxylate + L-aspartate + ATP = (2S)-2-[5-amino-1-(5-phospho-beta-D-ribosyl)imidazole-4-carboxamido]succinate + ADP + phosphate + 2 H(+). It participates in purine metabolism; IMP biosynthesis via de novo pathway; 5-amino-1-(5-phospho-D-ribosyl)imidazole-4-carboxamide from 5-amino-1-(5-phospho-D-ribosyl)imidazole-4-carboxylate: step 1/2. In Novosphingobium aromaticivorans (strain ATCC 700278 / DSM 12444 / CCUG 56034 / CIP 105152 / NBRC 16084 / F199), this protein is Phosphoribosylaminoimidazole-succinocarboxamide synthase.